Here is a 189-residue protein sequence, read N- to C-terminus: UPF0301 protein PP_4995 (189 aa).

Belongs to the UPF0301 (AlgH) family.

The protein is UPF0301 protein PP_4995 of Pseudomonas putida (strain ATCC 47054 / DSM 6125 / CFBP 8728 / NCIMB 11950 / KT2440).